A 620-amino-acid chain; its full sequence is Toxin coregulated pilus biosynthesis protein I (620 aa).

Residues 344 to 580 (TMNDLSIKQT…DVAKQMEDIR (237 aa)) form the Methyl-accepting transducer domain.

Belongs to the methyl-accepting chemotaxis (MCP) protein family.

It localises to the cell inner membrane. Functionally, may function as an environmental regulator of TCP biogenesis. Negatively regulates the synthesis of the major pilin subunit of TCP (TcpA). The sequence is that of Toxin coregulated pilus biosynthesis protein I (tcpI) from Vibrio cholerae serotype O1 (strain ATCC 39315 / El Tor Inaba N16961).